A 1310-amino-acid chain; its full sequence is Multidrug resistance protein 4 (1310 aa).

5 consecutive transmembrane segments (helical) span residues 48–68, 125–145, 196–216, 223–243, and 299–319; these read WLDLILLAVGIFGSIGCGVLT, MVCFAIGSGVGSFLMTFCFFV, KFGIIFQTTTSFIAGYAIGFA, LVIMSMSPFIVLSMTLLAVFA, and GLTVGLGLGAVMFFIMGAFSL. The 314-residue stretch at 55–368 folds into the ABC transmembrane type-1 1 domain; it reads AVGIFGSIGC…IAIPLNIFAT (314 aa). A glycan (N-linked (GlcNAc...) asparagine) is linked at N336. The helical transmembrane segment at 342–362 threads the bilayer; it reads VMIVFICVLIATQGLSIIAIP. An N-linked (GlcNAc...) asparagine glycan is attached at N402. An ABC transporter 1 domain is found at 403–642; the sequence is ITLEDVQFRY…KGTYYGLVKR (240 aa). 438–445 provides a ligand contact to ATP; sequence GASGCGKS. A glycan (N-linked (GlcNAc...) asparagine) is linked at N608. 2 helical membrane-spanning segments follow: residues 721 to 741 and 773 to 793; these read WFLSTFGFIGGIGGGAIFPFF and IIVVVIGVASFLSFFMYIGLF. One can recognise an ABC transmembrane type-1 2 domain in the interval 722 to 1030; sequence FLSTFGFIGG…LGNIVPDIGK (309 aa). A glycan (N-linked (GlcNAc...) asparagine) is linked at N816. Transmembrane regions (helical) follow at residues 849 to 869, 871 to 891, and 945 to 965; these read VGNVIHIISTIGFALGIAFYY, WKVSLAVMAVSPVLIVVVFIN, and IGIYKWAPLLSIFMCLTTLLT. The 240-residue stretch at 1065–1304 folds into the ABC transporter 2 domain; the sequence is IEFKDICFRY…KGFYYTLAMQ (240 aa). 1100–1107 lines the ATP pocket; the sequence is GASGCGKS.

Belongs to the ABC transporter superfamily. ABCB family. Multidrug resistance exporter (TC 3.A.1.201) subfamily.

The protein localises to the membrane. The catalysed reaction is ATP + H2O + xenobioticSide 1 = ADP + phosphate + xenobioticSide 2.. Functionally, energy-dependent efflux pump responsible for decreased drug accumulation in multidrug resistance parasites. The protein is Multidrug resistance protein 4 of Entamoeba histolytica (strain ATCC 30459 / HM-1:IMSS / ABRM).